A 324-amino-acid polypeptide reads, in one-letter code: MADYQTIYTQIQARGPHITVSGEWGDNDRVGKPFYSYWLGKIGDAQIGPIYLGASGIAAFAFGSTAILIILFNMAAEVHFDPLQFFRQFFWLGLYPPKAQYGMGIPPLHDGGWWLMAGLFMTLSLGSWWIRVYSRARALGLGTHIAWNFAAAIFFVLCIGCIHPTLVGSWSEGVPFGIWPHIDWLTAFSIRYGNFYYCPWHGFSIGFAYGCGLLFAAHGATILAVARFGGDREIEQITDRGTAVERAALFWRWTIGFNATIESVHRWGWFFSLMVMVSASVGILLTGTFVDNWYLWCVKHGAAPDYPAYLPATPDPASLPGAPK.

Topologically, residues 2–51 are cytoplasmic; sequence ADYQTIYTQIQARGPHITVSGEWGDNDRVGKPFYSYWLGKIGDAQIGPIY. A helical membrane pass occupies residues 52 to 76; sequence LGASGIAAFAFGSTAILIILFNMAA. Topologically, residues 77 to 110 are periplasmic; sequence EVHFDPLQFFRQFFWLGLYPPKAQYGMGIPPLHD. Residues 111–137 traverse the membrane as a helical segment; that stretch reads GGWWLMAGLFMTLSLGSWWIRVYSRAR. Residues 138–142 lie on the Cytoplasmic side of the membrane; the sequence is ALGLG. Residues 143–166 form a helical membrane-spanning segment; sequence THIAWNFAAAIFFVLCIGCIHPTL. Over 167-197 the chain is Periplasmic; that stretch reads VGSWSEGVPFGIWPHIDWLTAFSIRYGNFYY. Residues His-181 and His-201 each contribute to the (7R,8Z)-bacteriochlorophyll b site. A helical transmembrane segment spans residues 198-223; that stretch reads CPWHGFSIGFAYGCGLLFAAHGATIL. Residues His-218 and Glu-233 each coordinate Fe cation. Residues 224-259 are Cytoplasmic-facing; sequence AVARFGGDREIEQITDRGTAVERAALFWRWTIGFNA. Trp-251 lines the a ubiquinone pocket. A helical membrane pass occupies residues 260-284; the sequence is TIESVHRWGWFFSLMVMVSASVGIL. His-265 provides a ligand contact to Fe cation. Residues 285-324 lie on the Periplasmic side of the membrane; sequence LTGTFVDNWYLWCVKHGAAPDYPAYLPATPDPASLPGAPK.

Belongs to the reaction center PufL/M/PsbA/D family. In terms of assembly, reaction center is composed of four bacteriochlorophylls, two bacteriopheophytins, two ubiquinones, one iron, and three highly hydrophobic polypeptide chains (designated L, M, and H).

Its subcellular location is the cellular chromatophore membrane. In terms of biological role, the reaction center is a membrane-bound complex that mediates the initial photochemical event in the electron transfer process of photosynthesis. This Blastochloris viridis (Rhodopseudomonas viridis) protein is Reaction center protein M chain (pufM).